Consider the following 178-residue polypeptide: Large ribosomal subunit protein uL6 (178 aa).

This sequence belongs to the universal ribosomal protein uL6 family. In terms of assembly, part of the 50S ribosomal subunit.

Its function is as follows. This protein binds to the 23S rRNA, and is important in its secondary structure. It is located near the subunit interface in the base of the L7/L12 stalk, and near the tRNA binding site of the peptidyltransferase center. The protein is Large ribosomal subunit protein uL6 of Limosilactobacillus reuteri (strain DSM 20016) (Lactobacillus reuteri).